An 816-amino-acid chain; its full sequence is Leucine--tRNA ligase (816 aa).

The short motif at 42 to 52 (PYPSGSLHMGH) is the 'HIGH' region element. The short motif at 574-578 (KMSKS) is the 'KMSKS' region element. Position 577 (lysine 577) interacts with ATP.

It belongs to the class-I aminoacyl-tRNA synthetase family.

It is found in the cytoplasm. It carries out the reaction tRNA(Leu) + L-leucine + ATP = L-leucyl-tRNA(Leu) + AMP + diphosphate. This is Leucine--tRNA ligase from Ruthia magnifica subsp. Calyptogena magnifica.